Reading from the N-terminus, the 112-residue chain is Nucleoid-associated protein FTF0810c (112 aa).

The interval M1 to E27 is disordered. Residues E17 to E27 show a composition bias toward basic and acidic residues.

The protein belongs to the YbaB/EbfC family. As to quaternary structure, homodimer.

Its subcellular location is the cytoplasm. The protein resides in the nucleoid. Functionally, binds to DNA and alters its conformation. May be involved in regulation of gene expression, nucleoid organization and DNA protection. The chain is Nucleoid-associated protein FTF0810c from Francisella tularensis subsp. tularensis (strain FSC 198).